The following is a 2594-amino-acid chain: Protein sevenless (2594 aa).

Disordered regions lie at residues 1–34 (MFWREDAAQQQQQQQQQQQQQQQQQQPPHPPKRL) and 49–92 (KMST…RVRR). Residues 1–2141 (MFWREDAAQQ…FVSPEKRGSL (2141 aa)) lie on the Extracellular side of the membrane. Low complexity predominate over residues 9-26 (QQQQQQQQQQQQQQQQQQ). N-linked (GlcNAc...) asparagine glycans are attached at residues asparagine 77, asparagine 401, asparagine 508, asparagine 532, asparagine 641, asparagine 667, asparagine 778, asparagine 797, asparagine 874, and asparagine 980. Fibronectin type-III domains follow at residues 358–462 (ETTQ…TPME) and 468–560 (APII…SPLE). In terms of domain architecture, Fibronectin type-III 3 spans 838–938 (PPAPRELRAL…APLATRTWPL (101 aa)). One copy of the LDL-receptor class B repeat lies at 1024–1066 (GLLYWTDLARDCVQRLDPFSGERELLPIFGARHLALDSAQGHL). 2 consecutive Fibronectin type-III domains span residues 1227-1317 (LAVP…QLDT) and 1324-1430 (QPRR…VQSV). N-linked (GlcNAc...) asparagine glycosylation is found at asparagine 1257, asparagine 1344, asparagine 1382, asparagine 1577, asparagine 1587, asparagine 1665, asparagine 1752, asparagine 1776, asparagine 1824, asparagine 1908, asparagine 1966, and asparagine 2088. 4 Fibronectin type-III domains span residues 1711 to 1814 (TAAA…TLHT), 1821 to 1920 (APRN…SYAP), 1922 to 2010 (PPLQ…TLGD), and 2014 to 2132 (APGR…AEPF). A helical transmembrane segment spans residues 2142 to 2162 (VLAIIAPAAIVSSCVLALVLV). Topologically, residues 2163–2594 (RKLQKRRHRA…LYANEGISGL (432 aa)) are cytoplasmic. The Protein kinase domain occupies 2224-2495 (LTLLRFLGSG…KRCLSTLQAL (272 aa)). Residues 2230–2238 (LGSGAFGEV) and lysine 2257 contribute to the ATP site. The active-site Proton acceptor is the aspartate 2355. The residue at position 2391 (tyrosine 2391) is a Phosphotyrosine; by autocatalysis. A disordered region spans residues 2543 to 2568 (TVSTTDADTTGSPTTPTAPTTPTTTT). Low complexity predominate over residues 2545-2568 (STTDADTTGSPTTPTAPTTPTTTT).

This sequence belongs to the protein kinase superfamily. Tyr protein kinase family. Insulin receptor subfamily.

The protein resides in the cell membrane. The catalysed reaction is L-tyrosyl-[protein] + ATP = O-phospho-L-tyrosyl-[protein] + ADP + H(+). Functionally, receptor for an extracellular signal required to instruct a cell to differentiate into a R7 photoreceptor. The ligand for Sev is the Boss (Bride of Sevenless) protein. In Drosophila virilis (Fruit fly), this protein is Protein sevenless (sev).